The primary structure comprises 334 residues: D-alanine--D-alanine ligase (334 aa).

The ATP-grasp domain maps to 121-327; it reads KLWYDALDIP…FSEFLVQCVT (207 aa). ATP is bound at residue 151 to 206; sequence AFGHWGSIFVKAARQGSSVGCYKVTTEDQIAPAIEAAFGFSEQVLVEQAVKPRELE. Mg(2+)-binding residues include D281, E294, and N296.

Belongs to the D-alanine--D-alanine ligase family. It depends on Mg(2+) as a cofactor. Mn(2+) is required as a cofactor.

It localises to the cytoplasm. The catalysed reaction is 2 D-alanine + ATP = D-alanyl-D-alanine + ADP + phosphate + H(+). Its pathway is cell wall biogenesis; peptidoglycan biosynthesis. Its function is as follows. Cell wall formation. The polypeptide is D-alanine--D-alanine ligase (Vibrio cholerae serotype O1 (strain ATCC 39315 / El Tor Inaba N16961)).